The primary structure comprises 245 residues: Small ribosomal subunit protein uS2 (245 aa).

The protein belongs to the universal ribosomal protein uS2 family.

The polypeptide is Small ribosomal subunit protein uS2 (Pseudomonas entomophila (strain L48)).